The following is a 306-amino-acid chain: Ribosomal protein L11 methyltransferase (306 aa).

4 residues coordinate S-adenosyl-L-methionine: Thr-154, Gly-179, Asp-201, and Asn-242.

This sequence belongs to the methyltransferase superfamily. PrmA family.

The protein localises to the cytoplasm. The enzyme catalyses L-lysyl-[protein] + 3 S-adenosyl-L-methionine = N(6),N(6),N(6)-trimethyl-L-lysyl-[protein] + 3 S-adenosyl-L-homocysteine + 3 H(+). In terms of biological role, methylates ribosomal protein L11. The chain is Ribosomal protein L11 methyltransferase from Xanthomonas euvesicatoria pv. vesicatoria (strain 85-10) (Xanthomonas campestris pv. vesicatoria).